The sequence spans 300 residues: tRNA dimethylallyltransferase (300 aa).

9–16 (GPTASGKT) is a binding site for ATP. Residue 11–16 (TASGKT) coordinates substrate. The segment at 34–37 (DSQQ) is interaction with substrate tRNA.

The protein belongs to the IPP transferase family. Monomer. It depends on Mg(2+) as a cofactor.

It catalyses the reaction adenosine(37) in tRNA + dimethylallyl diphosphate = N(6)-dimethylallyladenosine(37) in tRNA + diphosphate. In terms of biological role, catalyzes the transfer of a dimethylallyl group onto the adenine at position 37 in tRNAs that read codons beginning with uridine, leading to the formation of N6-(dimethylallyl)adenosine (i(6)A). This is tRNA dimethylallyltransferase from Anaeromyxobacter sp. (strain Fw109-5).